We begin with the raw amino-acid sequence, 69 residues long: DNA-directed RNA polymerase subunit omega (69 aa).

This sequence belongs to the RNA polymerase subunit omega family. In terms of assembly, the RNAP catalytic core consists of 2 alpha, 1 beta, 1 beta' and 1 omega subunit. When a sigma factor is associated with the core the holoenzyme is formed, which can initiate transcription.

The enzyme catalyses RNA(n) + a ribonucleoside 5'-triphosphate = RNA(n+1) + diphosphate. Its function is as follows. Promotes RNA polymerase assembly. Latches the N- and C-terminal regions of the beta' subunit thereby facilitating its interaction with the beta and alpha subunits. In Exiguobacterium sp. (strain ATCC BAA-1283 / AT1b), this protein is DNA-directed RNA polymerase subunit omega.